We begin with the raw amino-acid sequence, 259 residues long: Ribosomal RNA small subunit methyltransferase A (259 aa).

Positions 13, 15, 39, 60, 84, and 101 each coordinate S-adenosyl-L-methionine.

The protein belongs to the class I-like SAM-binding methyltransferase superfamily. rRNA adenine N(6)-methyltransferase family. RsmA subfamily.

The protein resides in the cytoplasm. It catalyses the reaction adenosine(1518)/adenosine(1519) in 16S rRNA + 4 S-adenosyl-L-methionine = N(6)-dimethyladenosine(1518)/N(6)-dimethyladenosine(1519) in 16S rRNA + 4 S-adenosyl-L-homocysteine + 4 H(+). Functionally, specifically dimethylates two adjacent adenosines (A1518 and A1519) in the loop of a conserved hairpin near the 3'-end of 16S rRNA in the 30S particle. May play a critical role in biogenesis of 30S subunits. This Mesomycoplasma hyopneumoniae (strain J / ATCC 25934 / NCTC 10110) (Mycoplasma hyopneumoniae) protein is Ribosomal RNA small subunit methyltransferase A.